Reading from the N-terminus, the 578-residue chain is ATP-dependent RNA helicase CHR1 (578 aa).

The disordered stretch occupies residues 1 to 95 (MDIFRILSRG…NETKAKEEEI (95 aa)). 2 stretches are compositionally biased toward basic and acidic residues: residues 44 to 53 (EVERETDFFH) and 78 to 94 (NKEEQMETNETKAKEEE). A Q motif motif is present at residues 131 to 159 (DMIGRFHINKKVLSNLIDNEFVEPTPIQC). The 178-residue stretch at 162-339 (IPITLNNRDL…HSIMKDPLRI (178 aa)) folds into the Helicase ATP-binding domain. 175-182 (APTGSGKT) lines the ATP pocket. A DEAD box motif is present at residues 286–289 (DEAD). Residues 350-514 (TIDQKLVFTG…GYSQWMEDMG (165 aa)) form the Helicase C-terminal domain. Composition is skewed to basic and acidic residues over residues 517-531 (SKKEKKQIKTHEIQR) and 561-578 (ESKQESKQESHSNDEREE). The tract at residues 517 to 578 (SKKEKKQIKT…ESHSNDEREE (62 aa)) is disordered.

This sequence belongs to the DEAD box helicase family. DDX52/ROK1 subfamily. As to quaternary structure, interacts with the U3 snoRNA and is associated with the 90S and 40S pre-ribosomes.

It localises to the nucleus. Its subcellular location is the nucleolus. It catalyses the reaction ATP + H2O = ADP + phosphate + H(+). ATP-dependent RNA helicase involved in 40S ribosomal subunit biogenesis. Required for the processing and cleavage of 35S pre-rRNA at sites A0, A1, and A2, leading to mature 18S rRNA. This is ATP-dependent RNA helicase CHR1 (CHR1) from Candida albicans (strain SC5314 / ATCC MYA-2876) (Yeast).